The following is a 306-amino-acid chain: Serine/threonine-protein phosphatase PP2A-1 catalytic subunit (306 aa).

4 residues coordinate Mn(2+): Asp54, His56, Asp82, and Asn114. His115 serves as the catalytic Proton donor. Mn(2+) is bound by residues His164 and His238.

The protein belongs to the PPP phosphatase family. PP-2A subfamily. Requires Mn(2+) as cofactor.

The protein localises to the cytoplasm. The catalysed reaction is O-phospho-L-seryl-[protein] + H2O = L-seryl-[protein] + phosphate. The enzyme catalyses O-phospho-L-threonyl-[protein] + H2O = L-threonyl-[protein] + phosphate. This chain is Serine/threonine-protein phosphatase PP2A-1 catalytic subunit (PP2A1), found in Oryza sativa subsp. indica (Rice).